The chain runs to 65 residues: Small, acid-soluble spore protein C3 (65 aa).

Belongs to the alpha/beta-type SASP family.

Its function is as follows. SASP are bound to spore DNA. They are double-stranded DNA-binding proteins that cause DNA to change to an a-like conformation. They protect the DNA backbone from chemical and enzymatic cleavage and are thus involved in dormant spore's high resistance to UV light. This Priestia megaterium (Bacillus megaterium) protein is Small, acid-soluble spore protein C3 (SASP-C3).